The following is a 453-amino-acid chain: Gastrin/cholecystokinin type B receptor (453 aa).

At 1 to 57 the chain is on the extracellular side; it reads MELLKLNRSAQGSGAGPGASLCRAGGALLNSSGAGNLSCEPPRLRGAGTRELELAIR. 3 N-linked (GlcNAc...) asparagine glycosylation sites follow: N7, N30, and N36. The helical transmembrane segment at 58-79 threads the bilayer; sequence VTLYAVIFLMSVGGNVLIIVVL. Residues 80–87 are Cytoplasmic-facing; that stretch reads GLSRRLRT. The chain crosses the membrane as a helical span at residues 88-109; the sequence is VTNAFLLSLAVSDLLLAVACMP. Residues 110–131 lie on the Extracellular side of the membrane; the sequence is FTLLPNLMGTFIFGTVVCKAVS. C127 and C206 are oxidised to a cystine. Residues 132-150 form a helical membrane-spanning segment; sequence YLMGVSVSVSTLSLVAIAL. The Cytoplasmic segment spans residues 151–170; sequence ERYSAICRPLQARVWQTRSH. Residues 171–189 traverse the membrane as a helical segment; it reads AARVIIATWMLSGLLMVPY. The Extracellular segment spans residues 190–220; it reads PVYTAVQPAGGARALQCVHRWPSARVRQTWS. Residues 221–243 form a helical membrane-spanning segment; the sequence is VLLLLLLFFVPGVVMAVAYGLIS. At 244–339 the chain is on the cytoplasmic side; it reads RELYLGLRFD…KLLAKKRVVR (96 aa). Residues 258 to 286 form a disordered region; that stretch reads SESRVRSQGGLRGGAGPGPAPPNGSCRPE. A helical membrane pass occupies residues 340–361; sequence MLLVIVVLFFLCWLPLYSANTW. The Extracellular segment spans residues 362-379; the sequence is RAFDSSGAHRALSGAPIS. The chain crosses the membrane as a helical span at residues 380–400; that stretch reads FIHLLSYASACVNPLVYCFMH. Topologically, residues 401–453 are cytoplasmic; the sequence is RRFRQACLETCARCCPRPPRARPRPLPDEDPPTPSIASLSRLSYTTISTLGPG. C414 carries the S-palmitoyl cysteine lipid modification. The interval 422–453 is disordered; that stretch reads RPRPLPDEDPPTPSIASLSRLSYTTISTLGPG. Over residues 435–453 the composition is skewed to polar residues; that stretch reads SIASLSRLSYTTISTLGPG.

The protein belongs to the G-protein coupled receptor 1 family. As to expression, parietal cells, pancreas, brain and various neoplastic tissues.

Its subcellular location is the cell membrane. In terms of biological role, receptor for gastrin and cholecystokinin. The CCK-B receptors occur throughout the central nervous system where they modulate anxiety, analgesia, arousal, and neuroleptic activity. This receptor mediates its action by association with G proteins that activate a phosphatidylinositol-calcium second messenger system. This is Gastrin/cholecystokinin type B receptor (CCKBR) from Canis lupus familiaris (Dog).